A 258-amino-acid polypeptide reads, in one-letter code: Isoprenyl transferase 2 (258 aa).

The active site involves Asp35. Residue Asp35 participates in Mg(2+) binding. Residues 36 to 39 (GNRR), Trp40, Arg50, and 81 to 83 (SDD) contribute to the substrate site. Residue Asn84 is the Proton acceptor of the active site. Substrate contacts are provided by residues Arg87, Arg207, and 213–215 (RLS). Glu226 is a Mg(2+) binding site.

The protein belongs to the UPP synthase family. In terms of assembly, homodimer. Mg(2+) serves as cofactor.

In terms of biological role, catalyzes the condensation of isopentenyl diphosphate (IPP) with allylic pyrophosphates generating different type of terpenoids. This chain is Isoprenyl transferase 2, found in Streptomyces coelicolor (strain ATCC BAA-471 / A3(2) / M145).